The chain runs to 358 residues: Transcriptional repressor protein KorB (358 aa).

Residues 1 to 42 are compositionally biased toward low complexity; the sequence is MTAAQAKTTKKNTAAAAQEAAGAAQPSGLGLDSIGDLSSLLD. Disordered stretches follow at residues 1-79 and 256-305; these read MTAA…FSPE and DPNT…DKLK. The span at 275–285 shows a compositional bias: acidic residues; it reads AGDGQDGEDGD. The segment covering 286–305 has biased composition (basic and acidic residues); the sequence is QDGKDAKEKGAKEPDPDKLK.

This sequence belongs to the ParB family.

In terms of biological role, in conjunction with KorA, inhibits the transcription of the kilA, trfA and korAB operons. Is also involved in the negative control of the kilB operon. The polypeptide is Transcriptional repressor protein KorB (korB) (Escherichia coli).